Consider the following 69-residue polypeptide: Cytochrome c oxidase subunit 8A, mitochondrial (69 aa).

The transit peptide at 1–25 directs the protein to the mitochondrion; that stretch reads MSVLTPLLLRSLTGSARRLMVPRAQ. The SIFI-degron motif lies at 2-19; sequence SVLTPLLLRSLTGSARRL. At 26–36 the chain is on the mitochondrial matrix side; that stretch reads VHSKPAREQLG. The chain crosses the membrane as a helical span at residues 37–60; it reads VLDITIGLTSCFVCCLLPAGWVLS. Topologically, residues 61-69 are mitochondrial intermembrane; that stretch reads HLESYKKRE.

Belongs to the cytochrome c oxidase VIII family. Component of the cytochrome c oxidase (complex IV, CIV), a multisubunit enzyme composed of 14 subunits. The complex is composed of a catalytic core of 3 subunits MT-CO1, MT-CO2 and MT-CO3, encoded in the mitochondrial DNA, and 11 supernumerary subunits COX4I, COX5A, COX5B, COX6A, COX6B, COX6C, COX7A, COX7B, COX7C, COX8 and NDUFA4, which are encoded in the nuclear genome. The complex exists as a monomer or a dimer and forms supercomplexes (SCs) in the inner mitochondrial membrane with NADH-ubiquinone oxidoreductase (complex I, CI) and ubiquinol-cytochrome c oxidoreductase (cytochrome b-c1 complex, complex III, CIII), resulting in different assemblies (supercomplex SCI(1)III(2)IV(1) and megacomplex MCI(2)III(2)IV(2)). Post-translationally, in response to mitochondrial stress, the precursor protein is ubiquitinated by the SIFI complex in the cytoplasm before mitochondrial import, leading to its degradation. Within the SIFI complex, UBR4 initiates ubiquitin chain that are further elongated or branched by KCMF1.

Its subcellular location is the mitochondrion inner membrane. Its pathway is energy metabolism; oxidative phosphorylation. In terms of biological role, component of the cytochrome c oxidase, the last enzyme in the mitochondrial electron transport chain which drives oxidative phosphorylation. The respiratory chain contains 3 multisubunit complexes succinate dehydrogenase (complex II, CII), ubiquinol-cytochrome c oxidoreductase (cytochrome b-c1 complex, complex III, CIII) and cytochrome c oxidase (complex IV, CIV), that cooperate to transfer electrons derived from NADH and succinate to molecular oxygen, creating an electrochemical gradient over the inner membrane that drives transmembrane transport and the ATP synthase. Cytochrome c oxidase is the component of the respiratory chain that catalyzes the reduction of oxygen to water. Electrons originating from reduced cytochrome c in the intermembrane space (IMS) are transferred via the dinuclear copper A center (CU(A)) of subunit 2 and heme A of subunit 1 to the active site in subunit 1, a binuclear center (BNC) formed by heme A3 and copper B (CU(B)). The BNC reduces molecular oxygen to 2 water molecules using 4 electrons from cytochrome c in the IMS and 4 protons from the mitochondrial matrix. This is Cytochrome c oxidase subunit 8A, mitochondrial (Cox8a) from Mus musculus (Mouse).